A 420-amino-acid chain; its full sequence is ATP phosphoribosyltransferase regulatory subunit (420 aa).

It belongs to the class-II aminoacyl-tRNA synthetase family. HisZ subfamily. In terms of assembly, heteromultimer composed of HisG and HisZ subunits.

The protein resides in the cytoplasm. The protein operates within amino-acid biosynthesis; L-histidine biosynthesis; L-histidine from 5-phospho-alpha-D-ribose 1-diphosphate: step 1/9. In terms of biological role, required for the first step of histidine biosynthesis. May allow the feedback regulation of ATP phosphoribosyltransferase activity by histidine. The chain is ATP phosphoribosyltransferase regulatory subunit from Bacillus cereus (strain ZK / E33L).